The following is a 305-amino-acid chain: UDP-3-O-acyl-N-acetylglucosamine deacetylase (305 aa).

Zn(2+) contacts are provided by histidine 79, histidine 238, and aspartate 242. Catalysis depends on histidine 265, which acts as the Proton donor.

It belongs to the LpxC family. Zn(2+) is required as a cofactor.

It catalyses the reaction a UDP-3-O-[(3R)-3-hydroxyacyl]-N-acetyl-alpha-D-glucosamine + H2O = a UDP-3-O-[(3R)-3-hydroxyacyl]-alpha-D-glucosamine + acetate. Its pathway is glycolipid biosynthesis; lipid IV(A) biosynthesis; lipid IV(A) from (3R)-3-hydroxytetradecanoyl-[acyl-carrier-protein] and UDP-N-acetyl-alpha-D-glucosamine: step 2/6. In terms of biological role, catalyzes the hydrolysis of UDP-3-O-myristoyl-N-acetylglucosamine to form UDP-3-O-myristoylglucosamine and acetate, the committed step in lipid A biosynthesis. This is UDP-3-O-acyl-N-acetylglucosamine deacetylase from Proteus mirabilis (strain HI4320).